A 202-amino-acid chain; its full sequence is Probable nicotinate-nucleotide adenylyltransferase (202 aa).

This sequence belongs to the NadD family.

The catalysed reaction is nicotinate beta-D-ribonucleotide + ATP + H(+) = deamido-NAD(+) + diphosphate. It participates in cofactor biosynthesis; NAD(+) biosynthesis; deamido-NAD(+) from nicotinate D-ribonucleotide: step 1/1. In terms of biological role, catalyzes the reversible adenylation of nicotinate mononucleotide (NaMN) to nicotinic acid adenine dinucleotide (NaAD). The protein is Probable nicotinate-nucleotide adenylyltransferase of Clostridium perfringens (strain 13 / Type A).